The chain runs to 213 residues: Holliday junction resolvase RecU (213 aa).

Residues Thr-98, Asp-100, Glu-113, and Gln-132 each contribute to the Mg(2+) site.

The protein belongs to the RecU family. It depends on Mg(2+) as a cofactor.

The protein localises to the cytoplasm. It carries out the reaction Endonucleolytic cleavage at a junction such as a reciprocal single-stranded crossover between two homologous DNA duplexes (Holliday junction).. In terms of biological role, endonuclease that resolves Holliday junction intermediates in genetic recombination. Cleaves mobile four-strand junctions by introducing symmetrical nicks in paired strands. Promotes annealing of linear ssDNA with homologous dsDNA. Required for DNA repair, homologous recombination and chromosome segregation. The protein is Holliday junction resolvase RecU of Ligilactobacillus salivarius (strain UCC118) (Lactobacillus salivarius).